A 698-amino-acid polypeptide reads, in one-letter code: Sucrose non-fermenting protein kinase 1 (698 aa).

Positions 1–48 (MAPRGFEDEELTISLSSSHVRRPQQQQPPPPTQQQHAHQPGSRPADAP) are disordered. The region spanning 62–313 (YKVLRTLGEG…IEDIRADPWF (252 aa)) is the Protein kinase domain. ATP-binding positions include 68–76 (LGEGSFGKV) and K91. The Proton acceptor role is filled by D184. Positions 320–417 (YLQLPVEEFF…ALLEPEGSSP (98 aa)) are auto-inhibitory domain (AID). The UBA domain occupies 360 to 397 (VTEKISKTMGYGKNDVEEALQASEPSAIKDAYMIVREN). 3 disordered regions span residues 410–435 (LEPE…TTTA), 482–525 (TRTD…KKTK), and 564–597 (ESRH…IDPM). The span at 415–435 (SSPMLSMSSARSATSTTTTTA) shows a compositional bias: low complexity. Composition is skewed to basic and acidic residues over residues 484-493 (TDAEKEETSR) and 564-573 (ESRHAEERAE).

Belongs to the protein kinase superfamily. CAMK Ser/Thr protein kinase family. SNF1 subfamily. Component of the AMP-activated protein kinase complex also known as the SNF1 kinase complex (Snf1c), a heterotrimeric complex composed of a catalytic subunit alpha and 2 regulatory subunits beta and gamma.

It localises to the cytoplasm. The protein resides in the nucleus. It carries out the reaction L-seryl-[protein] + ATP = O-phospho-L-seryl-[protein] + ADP + H(+). The enzyme catalyses L-threonyl-[protein] + ATP = O-phospho-L-threonyl-[protein] + ADP + H(+). Catalytic subunit of the AMP-activated protein kinase complex also known as the SNF1 kinase complex (Snf1c), a central regulator of cellular energy homeostasis, which, in response to a fall in intracellular ATP levels, activates energy-producing pathways and inhibits energy-consuming processes. The complex phosphorylates histone H3 to form H3S10ph, which promotes H3K14ac formation, leading to transcriptional activation through TBP recruitment to the promoters. Activates the expression of the galactose oxidase (GOA) gene and of several cell wall-degrading enzymes (CWDEs) such as pectate lyase, xylanase and glucanase. Plays an important role in sudden death syndrome (SDS) by controlling the colonization of the infected roots. The sequence is that of Sucrose non-fermenting protein kinase 1 from Fusarium virguliforme.